The following is a 235-amino-acid chain: Uridylate kinase (235 aa).

K9–G12 lines the ATP pocket. The involved in allosteric activation by GTP stretch occupies residues G17–G22. G51 provides a ligand contact to UMP. Positions 52 and 56 each coordinate ATP. UMP contacts are provided by residues D71 and C132 to T139. 3 residues coordinate ATP: T159, Y165, and D168.

Belongs to the UMP kinase family. Homohexamer.

The protein resides in the cytoplasm. The enzyme catalyses UMP + ATP = UDP + ADP. The protein operates within pyrimidine metabolism; CTP biosynthesis via de novo pathway; UDP from UMP (UMPK route): step 1/1. Allosterically activated by GTP. Inhibited by UTP. In terms of biological role, catalyzes the reversible phosphorylation of UMP to UDP. The protein is Uridylate kinase of Synechococcus sp. (strain WH7803).